Consider the following 198-residue polypeptide: FMN-dependent NADH:quinone oxidoreductase 2 (198 aa).

136-139 provides a ligand contact to FMN; sequence SRGG.

This sequence belongs to the azoreductase type 1 family. Homodimer. FMN is required as a cofactor.

The enzyme catalyses 2 a quinone + NADH + H(+) = 2 a 1,4-benzosemiquinone + NAD(+). It catalyses the reaction N,N-dimethyl-1,4-phenylenediamine + anthranilate + 2 NAD(+) = 2-(4-dimethylaminophenyl)diazenylbenzoate + 2 NADH + 2 H(+). Quinone reductase that provides resistance to thiol-specific stress caused by electrophilic quinones. Its function is as follows. Also exhibits azoreductase activity. Catalyzes the reductive cleavage of the azo bond in aromatic azo compounds to the corresponding amines. This Clostridium perfringens (strain 13 / Type A) protein is FMN-dependent NADH:quinone oxidoreductase 2.